The following is a 179-amino-acid chain: MPGVLLWFFKGVIALLLAFAVGLIVYYYLEIRPIAQTALQSASFWLSESPQTRFLRRAAAKIHPKSYTARLLYTQAGVDGHFRIAIWVFWLDSLYRDDELYAMMLAQAYYGRDSQGNAVYGTKNAALTLFHVPVTEMACQQQVQLIYMFKAPSLYRPGSARLVESSKHYMTLCQEQIQQ.

This is an uncharacterized protein from Salmonella typhimurium (strain LT2 / SGSC1412 / ATCC 700720).